Here is a 1388-residue protein sequence, read N- to C-terminus: DNA-directed RNA polymerase subunit beta' (1388 aa).

Zn(2+) contacts are provided by Cys-65, Cys-67, Cys-80, and Cys-83. Positions 456, 458, and 460 each coordinate Mg(2+). Zn(2+) is bound by residues Cys-812, Cys-887, Cys-894, and Cys-897.

This sequence belongs to the RNA polymerase beta' chain family. As to quaternary structure, the RNAP catalytic core consists of 2 alpha, 1 beta, 1 beta' and 1 omega subunit. When a sigma factor is associated with the core the holoenzyme is formed, which can initiate transcription. Requires Mg(2+) as cofactor. Zn(2+) is required as a cofactor.

The catalysed reaction is RNA(n) + a ribonucleoside 5'-triphosphate = RNA(n+1) + diphosphate. Functionally, DNA-dependent RNA polymerase catalyzes the transcription of DNA into RNA using the four ribonucleoside triphosphates as substrates. This chain is DNA-directed RNA polymerase subunit beta', found in Protochlamydia amoebophila (strain UWE25).